Reading from the N-terminus, the 321-residue chain is Thymidylate synthase (321 aa).

The interval 1–32 is disordered; that stretch reads MVLTPTKDGPDQESMPLPADNGESPSKQQAPV. Phosphoserine is present on residues Ser24 and Ser26. Tyr39 is subject to Phosphotyrosine. DUMP contacts are provided by residues Arg56 and 181 to 182; that span reads RR. Cys201 serves as the catalytic Nucleophile. Phosphotyrosine is present on Tyr208. A Phosphoserine modification is found at Ser210. DUMP is bound by residues 223–226, Asn234, and 264–266; these read RSAD and HVY. Position 226 (Asp226) interacts with (6R)-5,10-methylene-5,6,7,8-tetrahydrofolate. Ala320 is a binding site for (6R)-5,10-methylene-5,6,7,8-tetrahydrofolate.

This sequence belongs to the thymidylate synthase family. Homodimer.

The catalysed reaction is dUMP + (6R)-5,10-methylene-5,6,7,8-tetrahydrofolate = 7,8-dihydrofolate + dTMP. The protein operates within pyrimidine metabolism; dTTP biosynthesis. The sequence is that of Thymidylate synthase (Ts) from Drosophila melanogaster (Fruit fly).